A 361-amino-acid chain; its full sequence is Chorismate synthase (361 aa).

2 residues coordinate NADP(+): Arg-48 and Arg-54. FMN contacts are provided by residues 125–127 (RSS), 238–239 (NA), Gly-278, 293–297 (KPTSS), and Arg-319.

The protein belongs to the chorismate synthase family. As to quaternary structure, homotetramer. FMNH2 serves as cofactor.

The catalysed reaction is 5-O-(1-carboxyvinyl)-3-phosphoshikimate = chorismate + phosphate. Its pathway is metabolic intermediate biosynthesis; chorismate biosynthesis; chorismate from D-erythrose 4-phosphate and phosphoenolpyruvate: step 7/7. Catalyzes the anti-1,4-elimination of the C-3 phosphate and the C-6 proR hydrogen from 5-enolpyruvylshikimate-3-phosphate (EPSP) to yield chorismate, which is the branch point compound that serves as the starting substrate for the three terminal pathways of aromatic amino acid biosynthesis. This reaction introduces a second double bond into the aromatic ring system. The chain is Chorismate synthase from Sodalis glossinidius (strain morsitans).